We begin with the raw amino-acid sequence, 254 residues long: Hydroxyacylglutathione hydrolase (254 aa).

Residues histidine 54, histidine 56, aspartate 58, histidine 59, histidine 111, aspartate 130, and histidine 168 each coordinate Zn(2+).

The protein belongs to the metallo-beta-lactamase superfamily. Glyoxalase II family. In terms of assembly, monomer. The cofactor is Zn(2+).

The catalysed reaction is an S-(2-hydroxyacyl)glutathione + H2O = a 2-hydroxy carboxylate + glutathione + H(+). It functions in the pathway secondary metabolite metabolism; methylglyoxal degradation; (R)-lactate from methylglyoxal: step 2/2. In terms of biological role, thiolesterase that catalyzes the hydrolysis of S-D-lactoyl-glutathione to form glutathione and D-lactic acid. This chain is Hydroxyacylglutathione hydrolase, found in Legionella pneumophila (strain Paris).